A 551-amino-acid polypeptide reads, in one-letter code: Hydroxylamine reductase (551 aa).

The [2Fe-2S] cluster site is built by Cys-3, Cys-6, Cys-18, and Cys-25. Hybrid [4Fe-2O-2S] cluster contacts are provided by His-249, Glu-273, Cys-317, Cys-405, Cys-433, Cys-458, Glu-492, and Lys-494. A Cysteine persulfide modification is found at Cys-405.

The protein belongs to the HCP family. [2Fe-2S] cluster is required as a cofactor. Requires hybrid [4Fe-2O-2S] cluster as cofactor.

The protein localises to the cytoplasm. The enzyme catalyses A + NH4(+) + H2O = hydroxylamine + AH2 + H(+). In terms of biological role, catalyzes the reduction of hydroxylamine to form NH(3) and H(2)O. In Edwardsiella ictaluri (strain 93-146), this protein is Hydroxylamine reductase.